Consider the following 769-residue polypeptide: MAKETFSIEFAGRTLTVETGQVAKQANGAVVVRYGDTTVLTAATMGKMATGDFFPLQVNYEEKMYAAGKFPGGFNKREARPSTDATLTARLIDRPIRPMFAEGFRNEVQVINTVLSYDENASGRVAAMFGSSLALAISDIPFDGPIAGVEVAYIDGKYVINPTVAEKESSSLELSVAGNINAINMVESGAKELSEEVMLGALLAGHNAVKELIEFQNEIVAKVGKEKAEVELLHVDEDLKAEVIAAYNSDLQKAVQVEEKLAREAATKAVKEAIISVYSAKYENDENLSIILRDLAEILEGMEHAEVRRLITEDKIRPDGRKIDEIRPLDAEIDFTPRSITHGTGLFTRGQTQALSTLTLAPMNEAQIIDGLNDEYKKRFMHHYNFPQYSVGETGRYGAPGRREIGHGALGERALEQVLPSLEEFPYAIRLVAEVLESNGSSSQASICAGTLALMAGGVPIKAPVAGIAMGLISDGTNYTVLTDIQGLEDHFGDMDFKVAGTREGITALQMDIKISGITPEILAEALAQAKTARFQILDVIEATIAQPREELAPSAPKIDTIMIPVDKIKVVIGKGGEQIDKIIAETGVKIDIDDEGLCSIFSSDQSAIDRAKEIIAELVREAKVGEVYEAKVVRIESFGAFVNLFGKQDAMVHISEMAWARTAKVEDVMKLGDVVKVKIMKIDDKGRVDASMRALVEKPEGYVEPERKPRERRDNKDRRNGNGFDRRNNDRNNHNNHNNNSGNHSFELRERKSHVDHEFPELSTKKPE.

Positions 490 and 496 each coordinate Mg(2+). One can recognise a KH domain in the interval 557–616; that stretch reads PKIDTIMIPVDKIKVVIGKGGEQIDKIIAETGVKIDIDDEGLCSIFSSDQSAIDRAKEII. The S1 motif domain maps to 626–694; it reads GEVYEAKVVR…DKGRVDASMR (69 aa). Over residues 700-734 the composition is skewed to basic and acidic residues; sequence PEGYVEPERKPRERRDNKDRRNGNGFDRRNNDRNN. The tract at residues 700 to 769 is disordered; that stretch reads PEGYVEPERK…FPELSTKKPE (70 aa). Residues 736–746 show a composition bias toward low complexity; it reads NNHNNNSGNHS. A compositionally biased stretch (basic and acidic residues) spans 747–769; sequence FELRERKSHVDHEFPELSTKKPE.

This sequence belongs to the polyribonucleotide nucleotidyltransferase family. The cofactor is Mg(2+).

Its subcellular location is the cytoplasm. It carries out the reaction RNA(n+1) + phosphate = RNA(n) + a ribonucleoside 5'-diphosphate. Involved in mRNA degradation. Catalyzes the phosphorolysis of single-stranded polyribonucleotides processively in the 3'- to 5'-direction. This is Polyribonucleotide nucleotidyltransferase from Lactococcus lactis subsp. cremoris (strain SK11).